A 330-amino-acid chain; its full sequence is Aspartate--ammonia ligase (330 aa).

It belongs to the class-II aminoacyl-tRNA synthetase family. AsnA subfamily.

It localises to the cytoplasm. It carries out the reaction L-aspartate + NH4(+) + ATP = L-asparagine + AMP + diphosphate + H(+). The protein operates within amino-acid biosynthesis; L-asparagine biosynthesis; L-asparagine from L-aspartate (ammonia route): step 1/1. This chain is Aspartate--ammonia ligase, found in Histophilus somni (strain 2336) (Haemophilus somnus).